A 716-amino-acid chain; its full sequence is Epidermal growth factor receptor kinase substrate 8-like protein 2 (716 aa).

Disordered regions lie at residues 1–25 (MSQS…DGVA) and 182–243 (PQTL…SQEE). The 157-residue stretch at 46 to 202 (MHETSQYHVQ…RQRQSILPPP (157 aa)) folds into the PID domain. Pro residues predominate over residues 199–208 (LPPPQGPAPI). Residues 234 to 243 (GFRRRESQEE) show a composition bias toward basic and acidic residues. The residue at position 240 (serine 240) is a Phosphoserine. Threonine 304 carries the phosphothreonine modification. A disordered region spans residues 449–488 (VSPVSRQSIRNSQKHSPTSEPTPPGDALPPVSSPHTHRGY). The residue at position 450 (serine 450) is a Phosphoserine. A compositionally biased stretch (polar residues) spans 452–467 (VSRQSIRNSQKHSPTS). The residue at position 470 (threonine 470) is a Phosphothreonine. An SH3 domain is found at 493–552 (AMAKYVKILYDFTARNANELSVLKDEVLEVLEDGRQWWKLRSRSGQAGYVPCNILGEARP). Serine 571 is subject to Phosphoserine.

This sequence belongs to the EPS8 family. As to quaternary structure, interacts with ABI1. Part of a complex that contains SOS1, ABI1 and EPS8L2. Associates with F-actin.

The protein resides in the cytoplasm. It is found in the cell projection. Its subcellular location is the stereocilium. Its function is as follows. Stimulates guanine exchange activity of SOS1. May play a role in membrane ruffling and remodeling of the actin cytoskeleton. In the cochlea, is required for stereocilia maintenance in adult hair cells. The polypeptide is Epidermal growth factor receptor kinase substrate 8-like protein 2 (EPS8L2) (Pongo abelii (Sumatran orangutan)).